The following is a 227-amino-acid chain: Phosphatidate cytidylyltransferase (227 aa).

A run of 6 helical transmembrane segments spans residues 31–51, 65–85, 93–113, 131–151, 165–185, and 206–226; these read FVIA…LVGM, IPYL…LTFL, WLIM…MIGG, WSGL…ASFI, IYLF…DLFI, and GVLD…FISI.

It belongs to the CDS family.

Its subcellular location is the cell membrane. The catalysed reaction is a 1,2-diacyl-sn-glycero-3-phosphate + CTP + H(+) = a CDP-1,2-diacyl-sn-glycerol + diphosphate. It functions in the pathway phospholipid metabolism; CDP-diacylglycerol biosynthesis; CDP-diacylglycerol from sn-glycerol 3-phosphate: step 3/3. The polypeptide is Phosphatidate cytidylyltransferase (cdsA) (Rickettsia felis (strain ATCC VR-1525 / URRWXCal2) (Rickettsia azadi)).